The following is a 149-amino-acid chain: 3-dehydroquinate dehydratase (149 aa).

Residue Y23 is the Proton acceptor of the active site. Positions 75, 81, and 88 each coordinate substrate. Residue H101 is the Proton donor of the active site. Residues 102–103 (LS) and R112 contribute to the substrate site.

It belongs to the type-II 3-dehydroquinase family. As to quaternary structure, homododecamer.

It catalyses the reaction 3-dehydroquinate = 3-dehydroshikimate + H2O. It functions in the pathway metabolic intermediate biosynthesis; chorismate biosynthesis; chorismate from D-erythrose 4-phosphate and phosphoenolpyruvate: step 3/7. Functionally, catalyzes a trans-dehydration via an enolate intermediate. The polypeptide is 3-dehydroquinate dehydratase (Stenotrophomonas maltophilia (strain R551-3)).